A 188-amino-acid polypeptide reads, in one-letter code: MSRLRIFADTNPATPEFDSRDGDAIAAQLQKIGVTFERWHASAPVEPGATPEQVMDAYRADIDRISAERGFKTVDVVSIAPDNPKREEMRAKFLDEHFHKEDEVRFFVAGSGLFTLHVDAKVYEIECVKDDLIAVPDGTLHWFDMGPEPHFVAIRFFTEPDGWVGHFTGTEIAKQFPRYAPEKPHKAS.

Fe(2+) is bound by residues histidine 97, histidine 99, glutamate 103, and histidine 141. The Ni(2+) site is built by histidine 97, histidine 99, glutamate 103, and histidine 141.

It belongs to the acireductone dioxygenase (ARD) family. As to quaternary structure, monomer. Fe(2+) serves as cofactor. The cofactor is Ni(2+).

It carries out the reaction 1,2-dihydroxy-5-(methylsulfanyl)pent-1-en-3-one + O2 = 3-(methylsulfanyl)propanoate + CO + formate + 2 H(+). The enzyme catalyses 1,2-dihydroxy-5-(methylsulfanyl)pent-1-en-3-one + O2 = 4-methylsulfanyl-2-oxobutanoate + formate + 2 H(+). The protein operates within amino-acid biosynthesis; L-methionine biosynthesis via salvage pathway; L-methionine from S-methyl-5-thio-alpha-D-ribose 1-phosphate: step 5/6. Functionally, catalyzes 2 different reactions between oxygen and the acireductone 1,2-dihydroxy-3-keto-5-methylthiopentene (DHK-MTPene) depending upon the metal bound in the active site. Fe-containing acireductone dioxygenase (Fe-ARD) produces formate and 2-keto-4-methylthiobutyrate (KMTB), the alpha-ketoacid precursor of methionine in the methionine recycle pathway. Ni-containing acireductone dioxygenase (Ni-ARD) produces methylthiopropionate, carbon monoxide and formate, and does not lie on the methionine recycle pathway. The chain is Acireductone dioxygenase from Xanthomonas euvesicatoria pv. vesicatoria (strain 85-10) (Xanthomonas campestris pv. vesicatoria).